The chain runs to 465 residues: Ribulose bisphosphate carboxylase large chain (465 aa).

N6,N6,N6-trimethyllysine is present on Lys-4. Residues Asn-113 and Thr-163 each contribute to the substrate site. The Proton acceptor role is filled by Lys-165. Lys-167 contributes to the substrate binding site. Residues Lys-191, Asp-193, and Glu-194 each contribute to the Mg(2+) site. Lys-191 carries the post-translational modification N6-carboxylysine. The Proton acceptor role is filled by His-284. Residues Arg-285, His-317, and Ser-369 each coordinate substrate.

The protein belongs to the RuBisCO large chain family. Type I subfamily. Heterohexadecamer of 8 large chains and 8 small chains; disulfide-linked. The disulfide link is formed within the large subunit homodimers. It depends on Mg(2+) as a cofactor. In terms of processing, the disulfide bond which can form in the large chain dimeric partners within the hexadecamer appears to be associated with oxidative stress and protein turnover.

The protein localises to the plastid. It is found in the chloroplast. The catalysed reaction is 2 (2R)-3-phosphoglycerate + 2 H(+) = D-ribulose 1,5-bisphosphate + CO2 + H2O. The enzyme catalyses D-ribulose 1,5-bisphosphate + O2 = 2-phosphoglycolate + (2R)-3-phosphoglycerate + 2 H(+). Its function is as follows. RuBisCO catalyzes two reactions: the carboxylation of D-ribulose 1,5-bisphosphate, the primary event in carbon dioxide fixation, as well as the oxidative fragmentation of the pentose substrate in the photorespiration process. Both reactions occur simultaneously and in competition at the same active site. The polypeptide is Ribulose bisphosphate carboxylase large chain (Eucommia ulmoides (Hardy rubber tree)).